The following is a 483-amino-acid chain: Glutamate--tRNA ligase (483 aa).

Positions 11 to 21 (PSPTGLLHIGN) match the 'HIGH' region motif. A 'KMSKS' region motif is present at residues 255–259 (KLSKR). Lys258 is an ATP binding site.

It belongs to the class-I aminoacyl-tRNA synthetase family. Glutamate--tRNA ligase type 1 subfamily. In terms of assembly, monomer.

The protein resides in the cytoplasm. The enzyme catalyses tRNA(Glu) + L-glutamate + ATP = L-glutamyl-tRNA(Glu) + AMP + diphosphate. Catalyzes the attachment of glutamate to tRNA(Glu) in a two-step reaction: glutamate is first activated by ATP to form Glu-AMP and then transferred to the acceptor end of tRNA(Glu). The polypeptide is Glutamate--tRNA ligase (Lactococcus lactis subsp. cremoris (strain SK11)).